Consider the following 474-residue polypeptide: Lipoprotein lipase (474 aa).

The N-terminal stretch at 1–27 (MESKALLLVVLGVWLQSLTAFRGGVAA) is a signal peptide. An interaction with GPIHBP1 region spans residues 32–53 (RDFSDIESKFALRTPEDTAEDT). C54 and C67 form a disulfide bridge. An N-linked (GlcNAc...) asparagine glycan is attached at N70. Y121 is subject to 3'-nitrotyrosine. The active-site Nucleophile is S159. Catalysis depends on D183, which acts as the Charge relay system. Residue Y191 is modified to 3'-nitrotyrosine. Residues A194, R197, S199, and D202 each contribute to the Ca(2+) site. A disulfide bridge links C243 with C266. The interval 243–266 (CNIGEAIRVIAERGLGDVDQLVKC) is essential for determining substrate specificity. H268 serves as the catalytic Charge relay system. 2 disulfide bridges follow: C291–C310 and C302–C305. Residues 341–464 (FHYQVKIHFS…KGKDSAVFVK (124 aa)) enclose the PLAT domain. Y343 carries the 3'-nitrotyrosine modification. N-linked (GlcNAc...) asparagine glycosylation is present at N386. The tract at residues 417–421 (WPDWW) is important for interaction with lipoprotein particles. The segment at 430-434 (RIRVK) is important for heparin binding. Positions 443–467 (IFCAREKVSHLQKGKDSAVFVKCHD) are interaction with GPIHBP1. A disulfide bridge connects residues C445 and C465.

It belongs to the AB hydrolase superfamily. Lipase family. Homodimer. Interacts with GPIHBP1 with 1:1 stoichiometry. Interacts with APOC2; the interaction activates LPL activity in the presence of lipids. Interaction with heparan sulfate proteoglycans is required to protect LPL against loss of activity. Associates with lipoprotein particles in blood plasma. Interacts with LMF1 and SEL1L; interaction with SEL1L is required to prevent aggregation of newly synthesized LPL in the endoplasmic reticulum (ER), and for normal export of LPL from the ER to the extracellular space. Interacts with SORL1; SORL1 acts as a sorting receptor, promoting LPL localization to endosomes and later to lysosomes, leading to degradation of newly synthesized LPL. In terms of processing, tyrosine nitration after lipopolysaccharide (LPS) challenge down-regulates the lipase activity. Post-translationally, N-glycosylated. As to expression, detected in white and brown adipose tissue and heart muscle, especially at the lumenal surface of capillaries. Detected on capillary endothelium in the lactating mammary gland. Detected in blood plasma (at protein level). Expressed in liver, epididymal fat, heart, psoas muscle, lactating mammary gland, adrenal, lung, and ovary. Highest levels in heart and adrenal gland.

Its subcellular location is the cell membrane. It is found in the secreted. The protein resides in the extracellular space. It localises to the extracellular matrix. It carries out the reaction a triacylglycerol + H2O = a diacylglycerol + a fatty acid + H(+). It catalyses the reaction a 1,2-diacyl-sn-glycero-3-phosphocholine + H2O = a 2-acyl-sn-glycero-3-phosphocholine + a fatty acid + H(+). The catalysed reaction is 1,2,3-tri-(9Z-octadecenoyl)-glycerol + H2O = di-(9Z)-octadecenoylglycerol + (9Z)-octadecenoate + H(+). The enzyme catalyses 1,2-di-(9Z-octadecenoyl)-sn-glycero-3-phosphocholine + H2O = (9Z-octadecenoyl)-sn-glycero-3-phosphocholine + (9Z)-octadecenoate + H(+). It carries out the reaction 1,2,3-tributanoylglycerol + H2O = dibutanoylglycerol + butanoate + H(+). It catalyses the reaction 1,2-dihexadecanoyl-sn-glycero-3-phosphocholine + H2O = hexadecanoyl-sn-glycero-3-phosphocholine + hexadecanoate + H(+). With respect to regulation, the apolipoprotein APOC2 acts as a coactivator of LPL activity. Ca(2+) binding promotes protein stability and formation of the active homodimer. Interaction with GPIHBP1 protects LPL against inactivation by ANGPTL4. Key enzyme in triglyceride metabolism. Catalyzes the hydrolysis of triglycerides from circulating chylomicrons and very low density lipoproteins (VLDL), and thereby plays an important role in lipid clearance from the blood stream, lipid utilization and storage. Although it has both phospholipase and triglyceride lipase activities it is primarily a triglyceride lipase with low but detectable phospholipase activity. Mediates margination of triglyceride-rich lipoprotein particles in capillaries. Recruited to its site of action on vascular endothelium by binding to GPIHBP1 and cell surface heparan sulfate proteoglycans. The sequence is that of Lipoprotein lipase (Lpl) from Mus musculus (Mouse).